The following is a 977-amino-acid chain: AP-2 complex subunit alpha-1 (977 aa).

The disordered stretch occupies residues 614–702; sequence AKLKRKKGPG…PSLGPTPEEA (89 aa). A phosphoserine mark is found at Ser-626 and Ser-652. Positions 646 to 657 are enriched in low complexity; that stretch reads PTPSTVSTPSPS. The residue at position 653 (Thr-653) is a Phosphothreonine. Ser-655 is subject to Phosphoserine. Residues 666-675 show a composition bias toward pro residues; sequence APPPAAPPAP.

Belongs to the adaptor complexes large subunit family. In terms of assembly, adaptor protein complex 2 (AP-2) is a heterotetramer composed of two large adaptins (alpha-type subunit AP2A1 or AP2A2 and beta-type subunit AP2B1), a medium adaptin (mu-type subunit AP2M1) and a small adaptin (sigma-type subunit AP2S1). Interacts with HIP1 and RAB11FIP2. Interacts with SLC12A5. Interacts with clathrin. Interacts with SGIP1. Interacts with RFTN1. Interacts with KIAA1107. Interacts with PICALM. Together with AP2B1 and AP2M1, it interacts with ADAM10; this interaction facilitates ADAM10 endocytosis from the plasma membrane during long-term potentiation in hippocampal neurons. Interacts with ABCB11; this interaction regulates cell membrane expression of ABCB11 through its internalization in a clathrin-dependent manner and its subsequent degradation. Probably interacts with ACE2 (via endocytic sorting signal motif); the interaction is inhibited by ACE2 phosphorylation. As to expression, expressed in the brain (at protein level). Isoform A: Expressed only in neuronal tissue and skeletal muscle. Isoform B: Widely expressed.

Its subcellular location is the cell membrane. The protein localises to the membrane. It localises to the coated pit. Functionally, component of the adaptor protein complex 2 (AP-2). Adaptor protein complexes function in protein transport via transport vesicles in different membrane traffic pathways. Adaptor protein complexes are vesicle coat components and appear to be involved in cargo selection and vesicle formation. AP-2 is involved in clathrin-dependent endocytosis in which cargo proteins are incorporated into vesicles surrounded by clathrin (clathrin-coated vesicles, CCVs) which are destined for fusion with the early endosome. The clathrin lattice serves as a mechanical scaffold but is itself unable to bind directly to membrane components. Clathrin-associated adaptor protein (AP) complexes which can bind directly to both the clathrin lattice and to the lipid and protein components of membranes are considered to be the major clathrin adaptors contributing the CCV formation. AP-2 also serves as a cargo receptor to selectively sort the membrane proteins involved in receptor-mediated endocytosis. AP-2 seems to play a role in the recycling of synaptic vesicle membranes from the presynaptic surface. AP-2 recognizes Y-X-X-[FILMV] (Y-X-X-Phi) and [ED]-X-X-X-L-[LI] endocytosis signal motifs within the cytosolic tails of transmembrane cargo molecules. AP-2 may also play a role in maintaining normal post-endocytic trafficking through the ARF6-regulated, non-clathrin pathway. The AP-2 alpha subunit binds polyphosphoinositide-containing lipids, positioning AP-2 on the membrane. During long-term potentiation in hippocampal neurons, AP-2 is responsible for the endocytosis of ADAM10. The AP-2 alpha subunit acts via its C-terminal appendage domain as a scaffolding platform for endocytic accessory proteins. The AP-2 alpha and AP-2 sigma subunits are thought to contribute to the recognition of the [ED]-X-X-X-L-[LI] motif. The chain is AP-2 complex subunit alpha-1 (Ap2a1) from Mus musculus (Mouse).